The primary structure comprises 383 residues: Histidine decarboxylase (383 aa).

H120 contacts substrate. K233 bears the N6-(pyridoxal phosphate)lysine mark.

The protein belongs to the group II decarboxylase family. In terms of assembly, homotetramer. Requires pyridoxal 5'-phosphate as cofactor.

The enzyme catalyses L-histidine + H(+) = histamine + CO2. The sequence is that of Histidine decarboxylase from Acinetobacter baumannii (strain AB307-0294).